The sequence spans 454 residues: UDP-N-acetylmuramoylalanine--D-glutamate ligase (454 aa).

116–122 (GTNGKTS) is an ATP binding site.

This sequence belongs to the MurCDEF family.

The protein resides in the cytoplasm. It catalyses the reaction UDP-N-acetyl-alpha-D-muramoyl-L-alanine + D-glutamate + ATP = UDP-N-acetyl-alpha-D-muramoyl-L-alanyl-D-glutamate + ADP + phosphate + H(+). Its pathway is cell wall biogenesis; peptidoglycan biosynthesis. Cell wall formation. Catalyzes the addition of glutamate to the nucleotide precursor UDP-N-acetylmuramoyl-L-alanine (UMA). In Lachnoclostridium phytofermentans (strain ATCC 700394 / DSM 18823 / ISDg) (Clostridium phytofermentans), this protein is UDP-N-acetylmuramoylalanine--D-glutamate ligase.